A 1120-amino-acid polypeptide reads, in one-letter code: DNA-directed RNA polymerase subunit beta (1120 aa).

It belongs to the RNA polymerase beta chain family. As to quaternary structure, in plastids the minimal PEP RNA polymerase catalytic core is composed of four subunits: alpha, beta, beta', and beta''. When a (nuclear-encoded) sigma factor is associated with the core the holoenzyme is formed, which can initiate transcription.

Its subcellular location is the plastid. It localises to the chloroplast. The enzyme catalyses RNA(n) + a ribonucleoside 5'-triphosphate = RNA(n+1) + diphosphate. Its function is as follows. DNA-dependent RNA polymerase catalyzes the transcription of DNA into RNA using the four ribonucleoside triphosphates as substrates. The polypeptide is DNA-directed RNA polymerase subunit beta (Gracilaria tenuistipitata var. liui (Red alga)).